Reading from the N-terminus, the 273-residue chain is Putative peptidyl-prolyl cis-trans isomerase Cbf2 (273 aa).

The N-terminal stretch at 1–21 is a signal peptide; the sequence is MKKFSLVAATLIAGVVLNVNA. The region spanning 131 to 228 is the PpiC domain; it reads PARVQAKHIL…FGYHVILKEN (98 aa).

It catalyses the reaction [protein]-peptidylproline (omega=180) = [protein]-peptidylproline (omega=0). This Campylobacter jejuni subsp. jejuni serotype O:2 (strain ATCC 700819 / NCTC 11168) protein is Putative peptidyl-prolyl cis-trans isomerase Cbf2 (cbf2).